The following is a 571-amino-acid chain: Transcription factor ABORTED MICROSPORES (571 aa).

Positions 275-284 (NDKDMNENGR) are enriched in basic and acidic residues. Disordered regions lie at residues 275–321 (NDKD…AERR), 365–390 (ELQDELEENSETEDGSNRPQGGMSLN), and 536–571 (DDHQHHNGHHHPFDHQMNQSAHHHHHHQHINHYHNQ). In terms of domain architecture, bHLH spans 310–359 (GSQAKNLMAERRRRKKLNDRLYALRSLVPRITKLDRASILGDAINYVKEL). A compositionally biased stretch (acidic residues) spans 368 to 378 (DELEENSETED). The span at 381–390 (NRPQGGMSLN) shows a compositional bias: polar residues. Basic residues predominate over residues 556-571 (AHHHHHHQHINHYHNQ).

As to quaternary structure, homodimer. Interacts with ASHR3. Mostly expressed in closed, post-meiotic buds, and, to a lower extent, in pre-meiotic buds. Detected in leaves, stems, and flowers.

The protein localises to the nucleus. Transcription factor. Plays a crucial role in tapetum development. Required for male fertility and pollen differentiation, especially during the post-meiotic transcriptional regulation of microspore development within the developing anther. Binds E-box regions in the AHL16/TEK promoter. This chain is Transcription factor ABORTED MICROSPORES (AMS), found in Arabidopsis thaliana (Mouse-ear cress).